The primary structure comprises 452 residues: Prephenate dehydrogenase [NADP(+)] (452 aa).

NADP(+) is bound at residue 14 to 43 (KVIGIIGLGDMGLLYANKFTDAGWGVICCD). A Prephenate/arogenate dehydrogenase domain is found at 14–297 (KVIGIIGLGD…GKHTGLLLLD (284 aa)).

The protein belongs to the prephenate/arogenate dehydrogenase family.

It catalyses the reaction prephenate + NADP(+) = 3-(4-hydroxyphenyl)pyruvate + CO2 + NADPH. Its pathway is amino-acid biosynthesis; L-tyrosine biosynthesis; (4-hydroxyphenyl)pyruvate from prephenate (NADP(+) route): step 1/1. The chain is Prephenate dehydrogenase [NADP(+)] (TYR1) from Saccharomyces cerevisiae (strain ATCC 204508 / S288c) (Baker's yeast).